The primary structure comprises 633 residues: MNSVLNSGRTTICDAYNVAAHDPFSFQHKSLDTVQKEWTEWKKNNHSLYLDPIVGTVASFLLKKVGSLVGKRILSELRNLIFPSGSTNLMQDILRETEKFLNQRLNTDTLARVNAELTGLQANVEEFNRQVDNFLNPNRNAVPLSITSSVNTMQQLFLNRLPQFQMQGYQLLLLPLFAQAANLHLSFIRDVILNADEWGISAATLRTYRDYLKNYTRDYSNYCINTYQSAFKGLNTRLHDMLEFRTYMFLNVFEYVSIWSLFKYQSLLVSSGANLYASGSGPQQTQSFTSQDWPFLYSLFQVNSNYVLNGFSGARLSNTFPNIVGLPGSTTTHALLAARVNYSGGISSGDIGASPFNQNFNCSTFLPPLLTPFVRSWLDSGSDREGVATVTNWQTESFETTLGLRSGAFTARGNSNYFPDYFIRNISGVPLVVRNEDLRRPLHYNEIRNIASPSGTPGGARAYMVSVHNRKNNIHAVHENGSMIHLAPNDYTGFTISPIHATQVNNQTRTFISEKFGNQGDSLRFEQNNTTARYTLRGNGNSYNLYLRVSSIGNSTIRVTINGRVYTATNVNTTTNNDGVNDNGARFSDINIGNVVASSNSDVPLDINVTLNSGTQFDLMNIMLVPTNISPLY.

Belongs to the delta endotoxin family.

In terms of biological role, promotes colloidosmotic lysis by binding to the midgut epithelial cells of lepidopteran (Manduca sexta) larvae. This chain is Pesticidal crystal protein Cry2Ab (cry2Ab), found in Bacillus thuringiensis subsp. kurstaki.